Consider the following 478-residue polypeptide: Putative UDP-glucose flavonoid 3-O-glucosyltransferase 3 (478 aa).

Belongs to the UDP-glycosyltransferase family.

This Fragaria ananassa (Strawberry) protein is Putative UDP-glucose flavonoid 3-O-glucosyltransferase 3.